The chain runs to 432 residues: Adenylosuccinate synthetase (432 aa).

Residues 12–18 (GDEGKGK) and 40–42 (GHT) contribute to the GTP site. Aspartate 13 serves as the catalytic Proton acceptor. Mg(2+) is bound by residues aspartate 13 and glycine 40. Residues 13–16 (DEGK), 38–41 (NAGH), threonine 132, arginine 146, glutamine 226, threonine 241, and arginine 305 each bind IMP. Histidine 41 functions as the Proton donor in the catalytic mechanism. 301-307 (VVTGRKR) serves as a coordination point for substrate. GTP-binding positions include arginine 307, 333–335 (KLD), and 415–417 (STS).

Belongs to the adenylosuccinate synthetase family. As to quaternary structure, homodimer. It depends on Mg(2+) as a cofactor.

Its subcellular location is the cytoplasm. The catalysed reaction is IMP + L-aspartate + GTP = N(6)-(1,2-dicarboxyethyl)-AMP + GDP + phosphate + 2 H(+). It participates in purine metabolism; AMP biosynthesis via de novo pathway; AMP from IMP: step 1/2. Functionally, plays an important role in the de novo pathway of purine nucleotide biosynthesis. Catalyzes the first committed step in the biosynthesis of AMP from IMP. This Rhizobium johnstonii (strain DSM 114642 / LMG 32736 / 3841) (Rhizobium leguminosarum bv. viciae) protein is Adenylosuccinate synthetase.